The following is a 384-amino-acid chain: Mitogen-activated protein kinase homolog 1 (384 aa).

Residues 32–319 (YVPIKPIGRG…VMEALQHPYM (288 aa)) enclose the Protein kinase domain. ATP contacts are provided by residues 38 to 46 (IGRGAYGIV) and lysine 61. Catalysis depends on aspartate 158, which acts as the Proton acceptor. Phosphothreonine is present on threonine 191. The TXY motif lies at 191-193 (TEY). Tyrosine 193 bears the Phosphotyrosine mark.

This sequence belongs to the protein kinase superfamily. CMGC Ser/Thr protein kinase family. MAP kinase subfamily. The cofactor is Mg(2+). Post-translationally, dually phosphorylated on Thr-191 and Tyr-193, which activates the enzyme. As to expression, expressed in vegetative organs such as leaf, root, or stem. In the reproductive organs, it is found in the ovary, but not in the stamen.

It catalyses the reaction L-seryl-[protein] + ATP = O-phospho-L-seryl-[protein] + ADP + H(+). It carries out the reaction L-threonyl-[protein] + ATP = O-phospho-L-threonyl-[protein] + ADP + H(+). Activated by tyrosine and threonine phosphorylation. In Petunia hybrida (Petunia), this protein is Mitogen-activated protein kinase homolog 1 (MPK1).